We begin with the raw amino-acid sequence, 298 residues long: Probable pyridoxal 5'-phosphate synthase subunit SNZ3 (298 aa).

Aspartate 21 contacts D-ribose 5-phosphate. The Schiff-base intermediate with D-ribose 5-phosphate role is filled by lysine 78. Residues glycine 150, glycine 213, and 234–235 (GS) each bind D-ribose 5-phosphate.

Belongs to the PdxS/SNZ family. In terms of assembly, homohexamer. Interacts with THI11.

It catalyses the reaction aldehydo-D-ribose 5-phosphate + D-glyceraldehyde 3-phosphate + L-glutamine = pyridoxal 5'-phosphate + L-glutamate + phosphate + 3 H2O + H(+). It functions in the pathway cofactor biosynthesis; pyridoxal 5'-phosphate biosynthesis. Functionally, catalyzes the formation of pyridoxal 5'-phosphate from ribose 5-phosphate (RBP), glyceraldehyde 3-phosphate (G3P) and ammonia. The ammonia is provided by a SNO isoform. Can also use ribulose 5-phosphate and dihydroxyacetone phosphate as substrates, resulting from enzyme-catalyzed isomerization of RBP and G3P, respectively. This is Probable pyridoxal 5'-phosphate synthase subunit SNZ3 (SNZ3) from Saccharomyces cerevisiae (strain ATCC 204508 / S288c) (Baker's yeast).